The primary structure comprises 311 residues: Ribonuclease HIII (311 aa).

The RNase H type-2 domain occupies 95-311 (MSIVGSDEVG…NTEKAFRLLK (217 aa)). A divalent metal cation is bound by residues Asp-101, Glu-102, and Asp-206.

This sequence belongs to the RNase HII family. RnhC subfamily. Mn(2+) is required as a cofactor. It depends on Mg(2+) as a cofactor.

It is found in the cytoplasm. The catalysed reaction is Endonucleolytic cleavage to 5'-phosphomonoester.. Its function is as follows. Endonuclease that specifically degrades the RNA of RNA-DNA hybrids. The chain is Ribonuclease HIII from Bacillus anthracis (strain A0248).